The primary structure comprises 523 residues: MKKFKRRLSLTLRGSQTIDESLSELAEQMTIEESSSKDNEPIVKNGRPPTSHSMHSFLHQYTGSFKKPPLRRPHSVIGGSLGSFMAMPRNGSRLDIVHENLKMGSDGESDQASGTSSDEVQSPTGVCLRNRIHRRISMEDLNKRLSLPADIRIPDGYLEKLQISSPPFDQPMSRRSRRASLSEIGFGKMETYIKLEKLGEGTYATVYKGRSKLTENLVALKEIRLEHEEGAPCTAIREVSLLKDLKHANIVTLHDIVHTDKSLTLVFEYLDKDLKQYMDDCGSIMSMHNVKLFLYQILRGLAYCHRRKVLHRDLKPQNLLINERGELKLADFGLARAKSVPTKTYSNEVVTLWYRPPDVLLGSSEYSTQIDMWGVGCIFFEMASGRPLFPGSTVEDELHLIFRLLGTPSQETWPGVSSNDEFKNYNFPKYKPQPLINHAPRLDSEGIELITKFLQYESKKRAPAEEAMKHVYFRSLGPRIHALPESVSIFSLKEIQLQKDPGFRNSSYPETGVFVINHFTCRS.

At Ser-9 the chain carries Phosphoserine. The disordered stretch occupies residues 31–55; sequence IEESSSKDNEPIVKNGRPPTSHSMH. Residues Ser-80, Ser-92, and Ser-105 each carry the phosphoserine modification. The disordered stretch occupies residues 103-123; that stretch reads MGSDGESDQASGTSSDEVQSP. Residues 110-123 show a composition bias toward polar residues; the sequence is DQASGTSSDEVQSP. A phosphoserine mark is found at Ser-137, Ser-146, Ser-165, and Ser-180. In terms of domain architecture, Protein kinase spans 192–473; that stretch reads YIKLEKLGEG…AEEAMKHVYF (282 aa). Residues 198–206 and Lys-221 each bind ATP; that span reads LGEGTYATV. The Proton acceptor role is filled by Asp-313.

Belongs to the protein kinase superfamily. CMGC Ser/Thr protein kinase family. CDC2/CDKX subfamily. As to quaternary structure, found in a complex containing CABLES1, CDK16 and TDRD7. Interacts with TDRD7. Brain specific. Within the brain it is concentrated in the neuronal layers of the hippocampus and olfactory bulb, which mostly consist of post-mitotic neurons.

It carries out the reaction L-seryl-[protein] + ATP = O-phospho-L-seryl-[protein] + ADP + H(+). The enzyme catalyses L-threonyl-[protein] + ATP = O-phospho-L-threonyl-[protein] + ADP + H(+). May play a role in terminally differentiated neurons. Has a Ser/Thr-phosphorylating activity for histone H1. This chain is Cyclin-dependent kinase 17 (Cdk17), found in Rattus norvegicus (Rat).